We begin with the raw amino-acid sequence, 154 residues long: Protein X (154 aa).

A mitochondrial targeting sequence region spans residues 68–117 (PCALRFTSARRMETTVNAHRNLPKVLHKRTLGLSAMSTTDLEAYFKDCVF).

The protein belongs to the orthohepadnavirus protein X family. In terms of assembly, may form homodimer. May interact with host CEBPA, CFLAR, CREB1, DDB1, E4F1, HBXIP, HSPD1/HSP60, NFKBIA, POLR2E and SMAD4. Interacts with host SMC5-SMC6 complex and induces its degradation. Interacts with host TRPC4AP; leading to prevent ubiquitination of TRPC4AP. Interacts with host PLSCR1; this interaction promotes ubiquitination and degradation of HBx and impairs HBx-mediated cell proliferation. A fraction may be phosphorylated in insect cells and HepG2 cells, a human hepatoblastoma cell line. Phosphorylated in vitro by host protein kinase C or mitogen-activated protein kinase. N-acetylated in insect cells.

The protein resides in the host cytoplasm. It is found in the host nucleus. Its subcellular location is the host mitochondrion. Multifunctional protein that plays a role in silencing host antiviral defenses and promoting viral transcription. Does not seem to be essential for HBV infection. May be directly involved in development of cirrhosis and liver cancer (hepatocellular carcinoma). Most of cytosolic activities involve modulation of cytosolic calcium. The effect on apoptosis is controversial depending on the cell types in which the studies have been conducted. May induce apoptosis by localizing in mitochondria and causing loss of mitochondrial membrane potential. May also modulate apoptosis by binding host CFLAR, a key regulator of the death-inducing signaling complex (DISC). Promotes viral transcription by using the host E3 ubiquitin ligase DDB1 to target the SMC5-SMC6 complex to proteasomal degradation. This host complex would otherwise bind to viral episomal DNA, and prevents its transcription. Moderately stimulates transcription of many different viral and cellular transcription elements. Promoters and enhancers stimulated by HBx contain DNA binding sites for NF-kappa-B, AP-1, AP-2, c-EBP, ATF/CREB, or the calcium-activated factor NF-AT. In Hepatitis B virus genotype B1 subtype adw (isolate Japan/pJDW233/1988) (HBV-B), this protein is Protein X.